A 622-amino-acid polypeptide reads, in one-letter code: Low affinity potassium transport system protein Kup (622 aa).

The next 12 helical transmembrane spans lie at 9 to 29 (LPAI…TSPL), 49 to 69 (VFGF…IKYL), 103 to 123 (VIMG…TPAI), 137 to 157 (PQLD…LFMI), 165 to 185 (VGKL…GLGL), 213 to 233 (VSFI…ALYA), 247 to 267 (WFTV…ALLL), 276 to 296 (PFFL…AALA), 337 to 357 (IYIP…IVSF), 363 to 383 (LAAA…ILST), 396 to 416 (FVAL…TANL), and 419 to 439 (LLSG…VMTT).

It belongs to the HAK/KUP transporter (TC 2.A.72) family.

The protein localises to the cell inner membrane. The catalysed reaction is K(+)(in) + H(+)(in) = K(+)(out) + H(+)(out). Responsible for the low-affinity transport of potassium into the cell. Likely operates as a K(+):H(+) symporter. This Shigella sonnei (strain Ss046) protein is Low affinity potassium transport system protein Kup.